We begin with the raw amino-acid sequence, 212 residues long: Thiamine-phosphate synthase (212 aa).

38 to 42 (QLREK) contacts 4-amino-2-methyl-5-(diphosphooxymethyl)pyrimidine. Mg(2+) contacts are provided by aspartate 71 and aspartate 90. Lysine 138 is a binding site for 4-amino-2-methyl-5-(diphosphooxymethyl)pyrimidine. 2-[(2R,5Z)-2-carboxy-4-methylthiazol-5(2H)-ylidene]ethyl phosphate is bound at residue glycine 166.

The protein belongs to the thiamine-phosphate synthase family. Mg(2+) serves as cofactor.

It carries out the reaction 2-[(2R,5Z)-2-carboxy-4-methylthiazol-5(2H)-ylidene]ethyl phosphate + 4-amino-2-methyl-5-(diphosphooxymethyl)pyrimidine + 2 H(+) = thiamine phosphate + CO2 + diphosphate. It catalyses the reaction 2-(2-carboxy-4-methylthiazol-5-yl)ethyl phosphate + 4-amino-2-methyl-5-(diphosphooxymethyl)pyrimidine + 2 H(+) = thiamine phosphate + CO2 + diphosphate. The enzyme catalyses 4-methyl-5-(2-phosphooxyethyl)-thiazole + 4-amino-2-methyl-5-(diphosphooxymethyl)pyrimidine + H(+) = thiamine phosphate + diphosphate. It functions in the pathway cofactor biosynthesis; thiamine diphosphate biosynthesis; thiamine phosphate from 4-amino-2-methyl-5-diphosphomethylpyrimidine and 4-methyl-5-(2-phosphoethyl)-thiazole: step 1/1. Condenses 4-methyl-5-(beta-hydroxyethyl)thiazole monophosphate (THZ-P) and 2-methyl-4-amino-5-hydroxymethyl pyrimidine pyrophosphate (HMP-PP) to form thiamine monophosphate (TMP). The protein is Thiamine-phosphate synthase of Chlamydia abortus (strain DSM 27085 / S26/3) (Chlamydophila abortus).